Reading from the N-terminus, the 689-residue chain is Elongation factor G (689 aa).

In terms of domain architecture, tr-type G spans 8–282 (LNTRNIGIMA…AVVDYLPSPL (275 aa)). Residues 17 to 24 (AHIDAGKT), 81 to 85 (DTPGH), and 135 to 138 (NKMD) contribute to the GTP site.

The protein belongs to the TRAFAC class translation factor GTPase superfamily. Classic translation factor GTPase family. EF-G/EF-2 subfamily.

The protein localises to the cytoplasm. Its function is as follows. Catalyzes the GTP-dependent ribosomal translocation step during translation elongation. During this step, the ribosome changes from the pre-translocational (PRE) to the post-translocational (POST) state as the newly formed A-site-bound peptidyl-tRNA and P-site-bound deacylated tRNA move to the P and E sites, respectively. Catalyzes the coordinated movement of the two tRNA molecules, the mRNA and conformational changes in the ribosome. The polypeptide is Elongation factor G (Mycoplasma mycoides subsp. mycoides SC (strain CCUG 32753 / NCTC 10114 / PG1)).